A 313-amino-acid chain; its full sequence is 4-diphosphocytidyl-2-C-methyl-D-erythritol kinase (313 aa).

The active site involves Lys-29. Position 113–123 (113–123) interacts with ATP; the sequence is PMGGGVGGGSS. Asp-155 is a catalytic residue.

Belongs to the GHMP kinase family. IspE subfamily.

It catalyses the reaction 4-CDP-2-C-methyl-D-erythritol + ATP = 4-CDP-2-C-methyl-D-erythritol 2-phosphate + ADP + H(+). The protein operates within isoprenoid biosynthesis; isopentenyl diphosphate biosynthesis via DXP pathway; isopentenyl diphosphate from 1-deoxy-D-xylulose 5-phosphate: step 3/6. Its function is as follows. Catalyzes the phosphorylation of the position 2 hydroxy group of 4-diphosphocytidyl-2C-methyl-D-erythritol. In Haemophilus influenzae (strain ATCC 51907 / DSM 11121 / KW20 / Rd), this protein is 4-diphosphocytidyl-2-C-methyl-D-erythritol kinase.